We begin with the raw amino-acid sequence, 437 residues long: Transcription factor E2F2 (437 aa).

Positions A65 to P105 are cyclin A/CDK2 binding. A DNA-binding region spans residues G107–G196. The interval L155 to L176 is leucine-zipper. The DEF box motif lies at E160 to G196. Residues M197–I289 form a dimerization region. The disordered stretch occupies residues V307–L368. Over residues E315 to S330 the composition is skewed to low complexity. The segment covering A351 to L365 has biased composition (pro residues). Residues A359–N437 form a transactivation region. The interval D410–D427 is retinoblastoma protein binding.

This sequence belongs to the E2F/DP family. As to quaternary structure, component of the DRTF1/E2F transcription factor complex. Forms heterodimers with DP family members. The E2F2 complex binds specifically hypophosphorylated retinoblastoma protein RB1. During the cell cycle, RB1 becomes phosphorylated in mid-to-late G1 phase, detaches from the DRTF1/E2F complex, rendering E2F transcriptionally active. Viral oncoproteins, notably E1A, T-antigen and HPV E7, are capable of sequestering RB1, thus releasing the active complex. Binds EAPP. Post-translationally, phosphorylated by CDK2 and cyclin A-CDK2 in the S-phase. In terms of tissue distribution, highest level of expression is found in placenta, low levels are found in lung. Found as well in many immortalized cell lines derived from tumor samples.

It localises to the nucleus. Functionally, transcription activator that binds DNA cooperatively with DP proteins through the E2 recognition site, 5'-TTTC[CG]CGC-3' found in the promoter region of a number of genes whose products are involved in cell cycle regulation or in DNA replication. The DRTF1/E2F complex functions in the control of cell-cycle progression from g1 to s phase. E2F2 binds specifically to RB1 in a cell-cycle dependent manner. This is Transcription factor E2F2 (E2F2) from Homo sapiens (Human).